The sequence spans 517 residues: Ribonuclease Y (517 aa).

Residues 3–23 (AILYVIVAVIALILGGAAGVA) form a helical membrane-spanning segment. Positions 207–292 (TVTVVSLPND…EMVEKAQKEV (86 aa)) constitute a KH domain. The HD domain maps to 333-426 (VLKHSIEVAH…VAAADAISAA (94 aa)).

The protein belongs to the RNase Y family.

The protein localises to the cell membrane. In terms of biological role, endoribonuclease that initiates mRNA decay. In Symbiobacterium thermophilum (strain DSM 24528 / JCM 14929 / IAM 14863 / T), this protein is Ribonuclease Y.